A 252-amino-acid polypeptide reads, in one-letter code: MVDSKLTIADRSFSSRLIMGTGGAGNLAVLEEALIASGTELTTVAIRRVDAEGGTGLLDLLNRLGITPLPNTAGCRGAAEAVLTAQLAREALNTNWIKLEVIADERTLLPDAVELVRAAEQLVDDGFVVLPYTNDDPVLARRLEDAGCAAVMPLGSPIGTGLGITNPHNIEMIVAGAGVPVVLDAGIGTASDAALAMELGCDAVLLATAVTRAGDPAAMAAAMSAAVTAGYLARRAGRIPKRFWAQASSPPR.

The active-site Schiff-base intermediate with DXP is the K98. Residues G159, 185–186 (AG), and 207–208 (AT) each bind 1-deoxy-D-xylulose 5-phosphate.

The protein belongs to the ThiG family. Homotetramer. Forms heterodimers with either ThiH or ThiS.

The protein resides in the cytoplasm. It carries out the reaction [ThiS sulfur-carrier protein]-C-terminal-Gly-aminoethanethioate + 2-iminoacetate + 1-deoxy-D-xylulose 5-phosphate = [ThiS sulfur-carrier protein]-C-terminal Gly-Gly + 2-[(2R,5Z)-2-carboxy-4-methylthiazol-5(2H)-ylidene]ethyl phosphate + 2 H2O + H(+). It functions in the pathway cofactor biosynthesis; thiamine diphosphate biosynthesis. Catalyzes the rearrangement of 1-deoxy-D-xylulose 5-phosphate (DXP) to produce the thiazole phosphate moiety of thiamine. Sulfur is provided by the thiocarboxylate moiety of the carrier protein ThiS. In vitro, sulfur can be provided by H(2)S. This Mycobacterium avium (strain 104) protein is Thiazole synthase.